Consider the following 239-residue polypeptide: Transcriptional regulatory protein DcuR (239 aa).

The 119-residue stretch at 3–121 (NVLIIDDDAM…RFEEALTGWR (119 aa)) folds into the Response regulatory domain. Position 56 is a 4-aspartylphosphate (aspartate 56). The segment at residues 181 to 200 (TDELANEVNISRVSCRKYLI) is a DNA-binding region (H-T-H motif).

Phosphorylated and activated by DcuS.

The protein resides in the cytoplasm. Functionally, member of the two-component regulatory system DcuR/DcuS. Involved in the C4-dicarboxylate-stimulated regulation of the genes encoding the anaerobic fumarate respiratory system (frdABCD; nuoAN; dcuB; dcuC; sdhCDAB; etc.). Weakly regulates the aerobic C4-dicarboxylate transporter dctA. This Shigella flexneri protein is Transcriptional regulatory protein DcuR (dcuR).